The primary structure comprises 379 residues: Chaperone protein DnaJ (379 aa).

The region spanning 7-72 (CYYETLEVER…DKRAAYDRYG (66 aa)) is the J domain. The CR-type zinc-finger motif lies at 135 to 213 (GKTAQIEIPV…CTGSGRVTKE (79 aa)). Zn(2+) contacts are provided by cysteine 148, cysteine 151, cysteine 165, cysteine 168, cysteine 187, cysteine 190, cysteine 201, and cysteine 204. 4 CXXCXGXG motif repeats span residues 148-155 (CEACSGTG), 165-172 (CSTCGGAG), 187-194 (CPSCQGRG), and 201-208 (CPSCTGSG).

It belongs to the DnaJ family. Homodimer. The cofactor is Zn(2+).

The protein localises to the cytoplasm. Participates actively in the response to hyperosmotic and heat shock by preventing the aggregation of stress-denatured proteins and by disaggregating proteins, also in an autonomous, DnaK-independent fashion. Unfolded proteins bind initially to DnaJ; upon interaction with the DnaJ-bound protein, DnaK hydrolyzes its bound ATP, resulting in the formation of a stable complex. GrpE releases ADP from DnaK; ATP binding to DnaK triggers the release of the substrate protein, thus completing the reaction cycle. Several rounds of ATP-dependent interactions between DnaJ, DnaK and GrpE are required for fully efficient folding. Also involved, together with DnaK and GrpE, in the DNA replication of plasmids through activation of initiation proteins. In Rhodopseudomonas palustris (strain ATCC BAA-98 / CGA009), this protein is Chaperone protein DnaJ.